A 131-amino-acid chain; its full sequence is Large ribosomal subunit protein bL21 (131 aa).

A compositionally biased stretch (basic and acidic residues) spans 106 to 116 (TIDDMPKKEAA). A disordered region spans residues 106 to 131 (TIDDMPKKEAAPAKARRSTKKAAAAE).

It belongs to the bacterial ribosomal protein bL21 family. Part of the 50S ribosomal subunit. Contacts protein L20.

This protein binds to 23S rRNA in the presence of protein L20. This is Large ribosomal subunit protein bL21 from Koribacter versatilis (strain Ellin345).